The chain runs to 189 residues: uncharacterized protein (189 aa).

Belongs to the inositol monophosphatase superfamily.

This is an uncharacterized protein from Leptospira biflexa.